The chain runs to 420 residues: 3-isopropylmalate dehydratase large subunit (420 aa).

[4Fe-4S] cluster is bound by residues Cys-300, Cys-360, and Cys-363.

Belongs to the aconitase/IPM isomerase family. LeuC type 2 subfamily. As to quaternary structure, heterodimer of LeuC and LeuD. Requires [4Fe-4S] cluster as cofactor.

It carries out the reaction (2R,3S)-3-isopropylmalate = (2S)-2-isopropylmalate. It participates in amino-acid biosynthesis; L-leucine biosynthesis; L-leucine from 3-methyl-2-oxobutanoate: step 2/4. In terms of biological role, catalyzes the isomerization between 2-isopropylmalate and 3-isopropylmalate, via the formation of 2-isopropylmaleate. The protein is 3-isopropylmalate dehydratase large subunit of Syntrophus aciditrophicus (strain SB).